The chain runs to 1037 residues: Guanine nucleotide-binding protein G(s) subunit alpha isoforms XLas (1037 aa).

Disordered regions lie at residues 1–105 (MGVR…MPFE), 185–224 (APGG…EETM), 283–588 (SPSQ…TSGC), and 640–666 (PLAE…KKRS). Residues 33 to 46 (APGAAAPGAGPSPA) show a composition bias toward low complexity. Residues 343 to 354 (PDKRERAERPPV) are compositionally biased toward basic and acidic residues. Low complexity-rich tracts occupy residues 361–408 (MEGA…GATP) and 416–521 (APAD…PASG). Positions 553–565 (GKSESSRGRRVYY) are enriched in basic and acidic residues. Over residues 572–583 (SDDDSSGDESDD) the composition is skewed to acidic residues. Over residues 640-660 (PLAEKRRQMRKEALEKRAQKR) the composition is skewed to basic and acidic residues. Residues 641–667 (LAEKRRQMRKEALEKRAQKRAEKKRSK) adopt a coiled-coil conformation. The G-alpha domain occupies 682 to 1037 (CTHRLLLLGA…RMHLRQYELL (356 aa)). A G1 motif region spans residues 685-698 (RLLLLGAGESGKST). A GTP-binding site is contributed by 690 to 698 (GAGESGKST). Position 697 (S697) interacts with Mg(2+). The tract at residues 711 to 734 (FNGEGGEEDPQAARSNSDGEKATK) is disordered. Positions 730–756 (EKATKVQDIKNNLKEAIETIVAAMSNL) form a coiled coil. Positions 839 to 847 (DLLRCRVLT) are G2 motif. GTP-binding positions include 840–847 (LLRCRVLT), 866–870 (DVGGQ), and 935–938 (NKQD). R844 is subject to ADP-ribosylarginine; by cholera toxin. T847 is a Mg(2+) binding site. Residues 862–871 (FHMFDVGGQR) form a G3 motif region. A G4 motif region spans residues 931–938 (ILFLNKQD). S995 is modified (phosphoserine). Residues 1007 to 1012 (TCAVDT) are G5 motif. A1009 provides a ligand contact to GTP.

The protein belongs to the G-alpha family. G(s) subfamily. In terms of assembly, g proteins are composed of 3 units; alpha, beta and gamma. The alpha chain contains the guanine nucleotide binding site. Interacts through its N-terminal region with ALEX which is produced from the same locus in a different open reading frame. This interaction may inhibit its adenylyl cyclase-stimulating activity. Interacts with MAGED2.

The protein resides in the cell membrane. Its subcellular location is the apical cell membrane. It carries out the reaction GTP + H2O = GDP + phosphate + H(+). In terms of biological role, guanine nucleotide-binding proteins (G proteins) function as transducers in numerous signaling pathways controlled by G protein-coupled receptors (GPCRs). The alpha chain contains the guanine nucleotide binding site and alternates between an active, GTP-bound state and an inactive, GDP-bound state. Signaling by an activated GPCR promotes GDP release and GTP binding. The alpha subunit has a low GTPase activity that converts bound GTP to GDP, thereby terminating the signal. Both GDP release and GTP hydrolysis are modulated by numerous regulatory proteins. Signaling involves the activation of adenylyl cyclases, resulting in increased levels of the signaling molecule cAMP. GNAS functions downstream of several GPCRs, including beta-adrenergic receptors. XLas isoforms interact with the same set of receptors as Gnas isoforms. The polypeptide is Guanine nucleotide-binding protein G(s) subunit alpha isoforms XLas (GNAS) (Homo sapiens (Human)).